The sequence spans 86 residues: Large ribosomal subunit protein bL27 (86 aa).

A compositionally biased stretch (gly residues) spans 1-10 (MAQKKGGGST). A disordered region spans residues 1–21 (MAQKKGGGSTRNGRDSESKRL).

This sequence belongs to the bacterial ribosomal protein bL27 family.

The chain is Large ribosomal subunit protein bL27 from Ralstonia pickettii (strain 12J).